A 501-amino-acid polypeptide reads, in one-letter code: Dipeptide and tripeptide permease A (501 aa).

Residues 1–34 are Cytoplasmic-facing; sequence MSTANNNQPESISMNAFKQPKAFYLIFSIELWER. A helical membrane pass occupies residues 35–55; the sequence is FGYYGLQGIMAVYLVKMLGMS. The Periplasmic portion of the chain corresponds to 56–59; the sequence is EADS. A helical transmembrane segment spans residues 60-80; that stretch reads ITLFSSFSALVYGFVAIGGWL. The Cytoplasmic segment spans residues 81 to 89; it reads GDKVLGAKR. The next 2 membrane-spanning stretches (helical) occupy residues 90 to 110 and 111 to 131; these read VIVL…YSGH and EIFW…LFKA. Topologically, residues 132 to 153 are periplasmic; that stretch reads NPSSLLSTCYSKDDPRLDGAFT. A helical transmembrane segment spans residues 154–174; sequence MYYMSINIGSFFSMLATPWLA. The Cytoplasmic portion of the chain corresponds to 175-178; sequence AKYG. The helical transmembrane segment at 179–199 threads the bilayer; it reads WSVAFSLSVVGMLITLVNFWF. At 200–220 the chain is on the periplasmic side; that stretch reads CRKWVKNQGSKPDFLPLQFKK. Residues 221–241 traverse the membrane as a helical segment; it reads LLMVLVGIIALITLSNWLLHN. Topologically, residues 242-246 are cytoplasmic; sequence QIIAR. A helical membrane pass occupies residues 247–267; it reads WALALVSLGIIFIFTKETLFL. At 268-274 the chain is on the periplasmic side; that stretch reads QGIARRR. A helical transmembrane segment spans residues 275–295; the sequence is MIVAFLLMLEAVIFFVLYSQM. At 296 to 320 the chain is on the cytoplasmic side; the sequence is PTSLNFFAIHNVEHSIFGIGFEPEQ. A helical membrane pass occupies residues 321-341; sequence FQALNPFWIMLASPILAAIYN. Residues 342–352 are Periplasmic-facing; it reads KMGDRLPMPHK. A helical transmembrane segment spans residues 353 to 373; the sequence is FAFGMMLCSAAFLVLPWGASF. At 374–383 the chain is on the cytoplasmic side; it reads ANEHGIVSVN. The helical transmembrane segment at 384 to 404 threads the bilayer; that stretch reads WLILSYALQSIGELMISGLGL. Residues 405–414 lie on the Periplasmic side of the membrane; that stretch reads AMVAQLVPQR. Residues 415–435 form a helical membrane-spanning segment; sequence LMGFIMGSWFLTTAAAALIAG. At 436–460 the chain is on the cytoplasmic side; the sequence is KVAALTAVPSDAITDAHASLAIYSH. Residues 461–481 form a helical membrane-spanning segment; sequence VFMQIGIVTAIIAVLMMLTAP. Topologically, residues 482–501 are periplasmic; that stretch reads KLYRMTLAPSDHNDVKIMTQ.

The protein belongs to the major facilitator superfamily. Proton-dependent oligopeptide transporter (POT/PTR) (TC 2.A.17) family. DtpA subfamily.

The protein localises to the cell inner membrane. Functionally, proton-dependent permease that transports di- and tripeptides. The sequence is that of Dipeptide and tripeptide permease A from Yersinia pestis.